Reading from the N-terminus, the 652-residue chain is Putative glycine--tRNA ligase (652 aa).

The interval 119–145 (GDKEARGQNSNDQPEESDDKKKRKKKV) is disordered. Glutamate 221 provides a ligand contact to glycine. ATP contacts are provided by residues 253-255 (RNE) and 264-265 (RV). Glycine is bound at residue glutamate 272. 380–381 (EC) lines the ATP pocket. 499–501 (EPS) serves as a coordination point for glycine. Position 506 (arginine 506) interacts with ATP.

Belongs to the class-II aminoacyl-tRNA synthetase family. In terms of assembly, homodimer.

Its subcellular location is the cytoplasm. It carries out the reaction tRNA(Gly) + glycine + ATP = glycyl-tRNA(Gly) + AMP + diphosphate. The catalysed reaction is 2 ATP + H(+) = P(1),P(4)-bis(5'-adenosyl) tetraphosphate + diphosphate. Functionally, catalyzes the ATP-dependent ligation of glycine to the 3'-end of its cognate tRNA, via the formation of an aminoacyl-adenylate intermediate (Gly-AMP). Also produces diadenosine tetraphosphate (Ap4A), a universal pleiotropic signaling molecule needed for cell regulation pathways, by direct condensation of 2 ATPs. Thereby, may play a special role in Ap4A homeostasis. In Schizosaccharomyces pombe (strain 972 / ATCC 24843) (Fission yeast), this protein is Putative glycine--tRNA ligase (grs1).